A 366-amino-acid polypeptide reads, in one-letter code: RNA 3'-terminal phosphate cyclase (366 aa).

6 residues coordinate ATP: glutamine 104, proline 131, tyrosine 294, aspartate 297, glutamine 298, and histidine 320. Histidine 320 serves as the catalytic Tele-AMP-histidine intermediate.

It belongs to the RNA 3'-terminal cyclase family. Type 1 subfamily. As to expression, detected in retinal ganglion cells (RGCs) (at protein level).

The protein localises to the nucleus. The protein resides in the nucleoplasm. The enzyme catalyses a 3'-end 3'-phospho-ribonucleotide-RNA + ATP = a 3'-end 2',3'-cyclophospho-ribonucleotide-RNA + AMP + diphosphate. In terms of biological role, catalyzes the conversion of 3'-phosphate to a 2',3'-cyclic phosphodiester at the end of RNA. The mechanism of action of the enzyme occurs in 3 steps: (A) adenylation of the enzyme by ATP; (B) transfer of adenylate to an RNA-N3'P to produce RNA-N3'PP5'A; (C) and attack of the adjacent 2'-hydroxyl on the 3'-phosphorus in the diester linkage to produce the cyclic end product. Likely functions in some aspects of cellular RNA processing. Function plays an important role in regulating axon regeneration by inhibiting central nervous system (CNS) axon regeneration following optic nerve injury. The sequence is that of RNA 3'-terminal phosphate cyclase from Mus musculus (Mouse).